Reading from the N-terminus, the 176-residue chain is Shikimate kinase (176 aa).

G14–S19 is a binding site for ATP. S18 serves as a coordination point for Mg(2+). Substrate contacts are provided by D36, R60, and G82. ATP is bound at residue R120. Substrate is bound at residue R138.

This sequence belongs to the shikimate kinase family. As to quaternary structure, monomer. The cofactor is Mg(2+).

The protein localises to the cytoplasm. The enzyme catalyses shikimate + ATP = 3-phosphoshikimate + ADP + H(+). It functions in the pathway metabolic intermediate biosynthesis; chorismate biosynthesis; chorismate from D-erythrose 4-phosphate and phosphoenolpyruvate: step 5/7. In terms of biological role, catalyzes the specific phosphorylation of the 3-hydroxyl group of shikimic acid using ATP as a cosubstrate. The polypeptide is Shikimate kinase (Dehalococcoides mccartyi (strain ATCC BAA-2266 / KCTC 15142 / 195) (Dehalococcoides ethenogenes (strain 195))).